The primary structure comprises 594 residues: Pre-mRNA-processing protein 45 (594 aa).

5 disordered regions span residues 36-63 (TTEY…RKGW), 223-254 (PPRF…TAQD), 370-426 (ETGI…SEMR), 498-523 (AGSS…SKDR), and 566-594 (EQFM…ARDE). 2 stretches are compositionally biased toward pro residues: residues 44 to 53 (APLPATPGPQ) and 235 to 244 (PAEPPPPVLQ). Acidic residues predominate over residues 383-397 (GSEEESDEEEEDEEA). 3 stretches are compositionally biased toward basic and acidic residues: residues 398-417 (IRER…KEMR), 513-523 (EGIKEEMSKDR), and 578-594 (RTAE…ARDE).

Belongs to the SNW family. As to quaternary structure, associated with the spliceosome.

It is found in the nucleus. Functionally, involved in pre-mRNA splicing. This is Pre-mRNA-processing protein 45 (PRP45) from Cryptococcus neoformans var. neoformans serotype D (strain B-3501A) (Filobasidiella neoformans).